Reading from the N-terminus, the 319-residue chain is Acetylglutamate kinase (319 aa).

Substrate is bound by residues 74 to 75, Arg-96, and Asn-210; that span reads GG.

This sequence belongs to the acetylglutamate kinase family. ArgB subfamily.

The protein resides in the cytoplasm. It catalyses the reaction N-acetyl-L-glutamate + ATP = N-acetyl-L-glutamyl 5-phosphate + ADP. It functions in the pathway amino-acid biosynthesis; L-arginine biosynthesis; N(2)-acetyl-L-ornithine from L-glutamate: step 2/4. Functionally, catalyzes the ATP-dependent phosphorylation of N-acetyl-L-glutamate. This is Acetylglutamate kinase from Pseudarthrobacter chlorophenolicus (strain ATCC 700700 / DSM 12829 / CIP 107037 / JCM 12360 / KCTC 9906 / NCIMB 13794 / A6) (Arthrobacter chlorophenolicus).